Reading from the N-terminus, the 171-residue chain is Co-chaperone protein HscB homolog (171 aa).

Residues 2 to 74 (NHFELFRLPF…ISRAEYMLSE (73 aa)) enclose the J domain.

This sequence belongs to the HscB family. In terms of assembly, interacts with HscA and stimulates its ATPase activity.

Functionally, co-chaperone involved in the maturation of iron-sulfur cluster-containing proteins. Seems to help targeting proteins to be folded toward HscA. The protein is Co-chaperone protein HscB homolog of Photobacterium profundum (strain SS9).